The primary structure comprises 198 residues: Glycerol-3-phosphate acyltransferase (198 aa).

The next 5 membrane-spanning stretches (helical) occupy residues 5 to 25 (LILLSLLAYVIGSIPSGLWIG), 56 to 76 (SIVTVMDILKGTVATLLPFFF), 84 to 104 (FWLLTGAFAIIGHSFPLFAGF), 114 to 134 (AGVILAYAPLLFVAALVVFLV), and 158 to 178 (LFMGDWILIVLVACIALFVIW).

Belongs to the PlsY family. In terms of assembly, probably interacts with PlsX.

It localises to the cell membrane. It catalyses the reaction an acyl phosphate + sn-glycerol 3-phosphate = a 1-acyl-sn-glycero-3-phosphate + phosphate. It participates in lipid metabolism; phospholipid metabolism. Its function is as follows. Catalyzes the transfer of an acyl group from acyl-phosphate (acyl-PO(4)) to glycerol-3-phosphate (G3P) to form lysophosphatidic acid (LPA). This enzyme utilizes acyl-phosphate as fatty acyl donor, but not acyl-CoA or acyl-ACP. This chain is Glycerol-3-phosphate acyltransferase, found in Listeria monocytogenes serovar 1/2a (strain ATCC BAA-679 / EGD-e).